Reading from the N-terminus, the 254-residue chain is 4-hydroxy-tetrahydrodipicolinate reductase (254 aa).

Residues 8-13, 87-89, and 111-114 contribute to the NAD(+) site; these read GASGKM, GTT, and ATNM. The active-site Proton donor/acceptor is the His-143. His-144 provides a ligand contact to (S)-2,3,4,5-tetrahydrodipicolinate. The Proton donor role is filled by Lys-147. 153–154 provides a ligand contact to (S)-2,3,4,5-tetrahydrodipicolinate; sequence GT.

This sequence belongs to the DapB family.

It is found in the cytoplasm. It carries out the reaction (S)-2,3,4,5-tetrahydrodipicolinate + NAD(+) + H2O = (2S,4S)-4-hydroxy-2,3,4,5-tetrahydrodipicolinate + NADH + H(+). It catalyses the reaction (S)-2,3,4,5-tetrahydrodipicolinate + NADP(+) + H2O = (2S,4S)-4-hydroxy-2,3,4,5-tetrahydrodipicolinate + NADPH + H(+). Its pathway is amino-acid biosynthesis; L-lysine biosynthesis via DAP pathway; (S)-tetrahydrodipicolinate from L-aspartate: step 4/4. In terms of biological role, catalyzes the conversion of 4-hydroxy-tetrahydrodipicolinate (HTPA) to tetrahydrodipicolinate. The chain is 4-hydroxy-tetrahydrodipicolinate reductase from Campylobacter fetus subsp. fetus (strain 82-40).